We begin with the raw amino-acid sequence, 309 residues long: Olfactory receptor 1L8 (309 aa).

Over 1-26 the chain is Extracellular; it reads MERINHTSSVSEFILLGLSSRPEDQK. N-linked (GlcNAc...) asparagine glycosylation is present at asparagine 5. Residues 27–50 traverse the membrane as a helical segment; that stretch reads TLFVLFLIVYLVTITGNLLIILAI. Topologically, residues 51-58 are cytoplasmic; the sequence is RFNPHLQT. A helical transmembrane segment spans residues 59-80; the sequence is PMYFFLSFLSLTDICFTTSVVP. The Extracellular segment spans residues 81–101; it reads KMLMNFLSEKKTISYAGCLTQ. Cysteine 98 and cysteine 190 are oxidised to a cystine. Residues 102-121 traverse the membrane as a helical segment; sequence MYFLYALGNSDSCLLAVMAF. At 122-140 the chain is on the cytoplasmic side; it reads DRYVAVCDPFHYVTTMSHH. The helical transmembrane segment at 141-159 threads the bilayer; sequence HCVLLVAFSCSFPHLHSLL. Over 160–197 the chain is Extracellular; it reads HTLLLNRLTFCDSNVIHHFLCDLSPVLKLSCSSIFVNE. A helical membrane pass occupies residues 198 to 220; the sequence is IVQMTEAPIVLVTRFLCIAFSYI. Residues 221–237 lie on the Cytoplasmic side of the membrane; that stretch reads RILTTVLKIPSTSGKRK. A helical membrane pass occupies residues 238-260; that stretch reads AFSTCGFYLTVVTLFYGSIFCVY. At 261-272 the chain is on the extracellular side; that stretch reads LQPPSTYAVKDH. A helical transmembrane segment spans residues 273-292; sequence VATIVYTVLSSMLNPFIYSL. Residues 293–309 are Cytoplasmic-facing; the sequence is RNKDLKQGLRKLMSKRS.

It belongs to the G-protein coupled receptor 1 family.

The protein resides in the cell membrane. Odorant receptor. The sequence is that of Olfactory receptor 1L8 (OR1L8) from Homo sapiens (Human).